The following is a 127-amino-acid chain: MSAAGARGLRATYHRLLDKVELMLPEKLRPLYNHPAGPRTVFFWAPIMKRGLVCAGLADMARPAEKLSTAQSAVLMATGFIWSRYSLVIIPKNWSLFAVNFFVGAAGASQLFRIWRYNQELKAKAHK.

Residues 2–40 lie on the Mitochondrial matrix side of the membrane; sequence SAAGARGLRATYHRLLDKVELMLPEKLRPLYNHPAGPRT. The helical transmembrane segment at 41-61 threads the bilayer; that stretch reads VFFWAPIMKRGLVCAGLADMA. Residues 62-72 are Mitochondrial intermembrane-facing; it reads RPAEKLSTAQS. A helical transmembrane segment spans residues 73-90; it reads AVLMATGFIWSRYSLVII. Over 91–95 the chain is Mitochondrial matrix; the sequence is PKNWS. The chain crosses the membrane as a helical span at residues 96-115; that stretch reads LFAVNFFVGAAGASQLFRIW. At 116–127 the chain is on the mitochondrial intermembrane side; the sequence is RYNQELKAKAHK.

It belongs to the mitochondrial pyruvate carrier (MPC) (TC 2.A.105) family. Homodimer. Homooligomer. Forms heterodimers with MPC1 and MPC1L. The heterodimer is the more stable and dominant form.

The protein localises to the mitochondrion inner membrane. It carries out the reaction pyruvate(out) + H(+)(out) = pyruvate(in) + H(+)(in). In terms of biological role, mediates the uptake of pyruvate into mitochondria. This is Mitochondrial pyruvate carrier 2 (MPC2) from Pongo abelii (Sumatran orangutan).